Here is a 429-residue protein sequence, read N- to C-terminus: Serine hydroxymethyltransferase (429 aa).

(6S)-5,6,7,8-tetrahydrofolate contacts are provided by residues L126 and G130 to L132. K235 carries the post-translational modification N6-(pyridoxal phosphate)lysine. Residue S359–F361 participates in (6S)-5,6,7,8-tetrahydrofolate binding.

This sequence belongs to the SHMT family. As to quaternary structure, homodimer. The cofactor is pyridoxal 5'-phosphate.

It localises to the cytoplasm. It carries out the reaction (6R)-5,10-methylene-5,6,7,8-tetrahydrofolate + glycine + H2O = (6S)-5,6,7,8-tetrahydrofolate + L-serine. The protein operates within one-carbon metabolism; tetrahydrofolate interconversion. Its pathway is amino-acid biosynthesis; glycine biosynthesis; glycine from L-serine: step 1/1. In terms of biological role, catalyzes the reversible interconversion of serine and glycine with tetrahydrofolate (THF) serving as the one-carbon carrier. This reaction serves as the major source of one-carbon groups required for the biosynthesis of purines, thymidylate, methionine, and other important biomolecules. Also exhibits THF-independent aldolase activity toward beta-hydroxyamino acids, producing glycine and aldehydes, via a retro-aldol mechanism. The chain is Serine hydroxymethyltransferase from Synechococcus sp. (strain WH7803).